The primary structure comprises 961 residues: Valine--tRNA ligase (961 aa).

A 'HIGH' region motif is present at residues 48–58 (PNVTGSLHMGH). The short motif at 560 to 564 (KMSKS) is the 'KMSKS' region element. An ATP-binding site is contributed by K563. The stretch at 892–961 (FINKDTELAR…QAQFKAIEAL (70 aa)) forms a coiled coil.

The protein belongs to the class-I aminoacyl-tRNA synthetase family. ValS type 1 subfamily. In terms of assembly, monomer.

It is found in the cytoplasm. It carries out the reaction tRNA(Val) + L-valine + ATP = L-valyl-tRNA(Val) + AMP + diphosphate. In terms of biological role, catalyzes the attachment of valine to tRNA(Val). As ValRS can inadvertently accommodate and process structurally similar amino acids such as threonine, to avoid such errors, it has a 'posttransfer' editing activity that hydrolyzes mischarged Thr-tRNA(Val) in a tRNA-dependent manner. The sequence is that of Valine--tRNA ligase from Haemophilus ducreyi (strain 35000HP / ATCC 700724).